The sequence spans 171 residues: Nudix hydrolase DR_0079 (171 aa).

Positions 32–162 (ERVRVVNAFL…EAAKGDLAEL (131 aa)) constitute a Nudix hydrolase domain. Positions 69–91 (GGAVQSGETYEEAFRREAREELN) match the Nudix box motif. Residues Glu85 and Glu89 each coordinate Mg(2+).

The protein belongs to the Nudix hydrolase family. As to quaternary structure, monomer. The cofactor is Mg(2+).

Its activity is regulated as follows. Inhibited by zinc, calcium or copper ions. Functionally, hydrolase that converts various nucleotide triphosphates (NTPs) to the corresponding nucleotide monophosphates and diphosphate, and nucleotide diphosphates to nucleotide monophosphates and inorganic phosphate. Has a marked preference for cytosine ribonucleoside 5'-diphosphate (CDP) and cytosine ribonucleoside 5'-triphosphate (CTP). Has lower activity towards the deoxyribose nucleotides dCDP and dCTP, and towards dGDP, TDP and UDP. This chain is Nudix hydrolase DR_0079, found in Deinococcus radiodurans (strain ATCC 13939 / DSM 20539 / JCM 16871 / CCUG 27074 / LMG 4051 / NBRC 15346 / NCIMB 9279 / VKM B-1422 / R1).